We begin with the raw amino-acid sequence, 277 residues long: Proteasome subunit beta type-7 (277 aa).

Residues 1-43 constitute a propeptide, removed in mature form; the sequence is MAAVSVFQAPVGGFSFDNCRRNAVLEADFAKKGFKLPKARKTG. Threonine 44 functions as the Nucleophile in the catalytic mechanism.

Belongs to the peptidase T1B family. As to quaternary structure, the 26S proteasome consists of a 20S proteasome core and two 19S regulatory subunits. The 20S proteasome core is a barrel-shaped complex made of 28 subunits that are arranged in four stacked rings. The two outer rings are each formed by seven alpha subunits, and the two inner rings are formed by seven beta subunits. The proteolytic activity is exerted by three beta-subunits PSMB5, PSMB6 and PSMB7.

The protein resides in the cytoplasm. It is found in the nucleus. The catalysed reaction is Cleavage of peptide bonds with very broad specificity.. Its function is as follows. Component of the 20S core proteasome complex involved in the proteolytic degradation of most intracellular proteins. This complex plays numerous essential roles within the cell by associating with different regulatory particles. Associated with two 19S regulatory particles, forms the 26S proteasome and thus participates in the ATP-dependent degradation of ubiquitinated proteins. The 26S proteasome plays a key role in the maintenance of protein homeostasis by removing misfolded or damaged proteins that could impair cellular functions, and by removing proteins whose functions are no longer required. Associated with the PA200 or PA28, the 20S proteasome mediates ubiquitin-independent protein degradation. This type of proteolysis is required in several pathways including spermatogenesis (20S-PA200 complex) or generation of a subset of MHC class I-presented antigenic peptides (20S-PA28 complex). Within the 20S core complex, PSMB7 displays a trypsin-like activity. This Rattus norvegicus (Rat) protein is Proteasome subunit beta type-7 (Psmb7).